The sequence spans 587 residues: Urease subunit alpha (587 aa).

The region spanning 134–572 (GGIDTHVHFI…LPLAQRYLYT (439 aa)) is the Urease domain. Residues His139, His141, and Lys222 each contribute to the Ni(2+) site. Lys222 bears the N6-carboxylysine mark. His224 contacts substrate. His251 and His277 together coordinate Ni(2+). Catalysis depends on His325, which acts as the Proton donor. Position 365 (Asp365) interacts with Ni(2+).

This sequence belongs to the metallo-dependent hydrolases superfamily. Urease alpha subunit family. Heterotrimer of UreA (gamma), UreB (beta) and UreC (alpha) subunits. Three heterotrimers associate to form the active enzyme. Requires Ni cation as cofactor. Carboxylation allows a single lysine to coordinate two nickel ions.

It localises to the cytoplasm. It catalyses the reaction urea + 2 H2O + H(+) = hydrogencarbonate + 2 NH4(+). The protein operates within nitrogen metabolism; urea degradation; CO(2) and NH(3) from urea (urease route): step 1/1. This Clostridium perfringens protein is Urease subunit alpha.